The following is a 294-amino-acid chain: MAITAQMVKELREKTGAGMMDCKKALQETNGDIEQAIDFLREKGMAKAAKKADRVAAEGLTHIEVEGNKAAIIEVNCETDFVTKNDQFKQLLSELGKHIVANEPATVEEALQQKLHGDGETVESVITNAVAKIGEKISLRRFEVLEKTDNDAFGAYLHMGGTIGVLSLLEGTTDEQVGKDIAMHVAAVNPRYVTRDEVAEEEVNREREVLKTQALNEGKPENIVEKMVEGRLGKFFEDIVLLEQSFVKDPDQKVKKYVADKGAAVKTFVRYEVGEGMEKREENFAEEVMSQIKK.

Positions threonine 79–valine 82 are involved in Mg(2+) ion dislocation from EF-Tu.

The protein belongs to the EF-Ts family.

The protein localises to the cytoplasm. Associates with the EF-Tu.GDP complex and induces the exchange of GDP to GTP. It remains bound to the aminoacyl-tRNA.EF-Tu.GTP complex up to the GTP hydrolysis stage on the ribosome. The polypeptide is Elongation factor Ts (Oceanobacillus iheyensis (strain DSM 14371 / CIP 107618 / JCM 11309 / KCTC 3954 / HTE831)).